Here is a 361-residue protein sequence, read N- to C-terminus: UDP-N-acetylglucosamine--N-acetylmuramyl-(pentapeptide) pyrophosphoryl-undecaprenol N-acetylglucosamine transferase (361 aa).

UDP-N-acetyl-alpha-D-glucosamine-binding positions include 12–14 (TGG), Asn126, Arg167, Ser192, Ile247, and Gln292.

This sequence belongs to the glycosyltransferase 28 family. MurG subfamily.

It is found in the cell inner membrane. The catalysed reaction is di-trans,octa-cis-undecaprenyl diphospho-N-acetyl-alpha-D-muramoyl-L-alanyl-D-glutamyl-meso-2,6-diaminopimeloyl-D-alanyl-D-alanine + UDP-N-acetyl-alpha-D-glucosamine = di-trans,octa-cis-undecaprenyl diphospho-[N-acetyl-alpha-D-glucosaminyl-(1-&gt;4)]-N-acetyl-alpha-D-muramoyl-L-alanyl-D-glutamyl-meso-2,6-diaminopimeloyl-D-alanyl-D-alanine + UDP + H(+). It functions in the pathway cell wall biogenesis; peptidoglycan biosynthesis. Cell wall formation. Catalyzes the transfer of a GlcNAc subunit on undecaprenyl-pyrophosphoryl-MurNAc-pentapeptide (lipid intermediate I) to form undecaprenyl-pyrophosphoryl-MurNAc-(pentapeptide)GlcNAc (lipid intermediate II). This is UDP-N-acetylglucosamine--N-acetylmuramyl-(pentapeptide) pyrophosphoryl-undecaprenol N-acetylglucosamine transferase from Syntrophus aciditrophicus (strain SB).